A 405-amino-acid chain; its full sequence is Formate-dependent phosphoribosylglycinamide formyltransferase (405 aa).

N(1)-(5-phospho-beta-D-ribosyl)glycinamide contacts are provided by residues 22–23 (EL) and glutamate 82. ATP is bound by residues arginine 115, lysine 162, 167 to 172 (SSGKGQ), 202 to 205 (EGFI), and glutamate 210. One can recognise an ATP-grasp domain in the interval 120–320 (RLAAETLGLP…EFELHARAIL (201 aa)). 2 residues coordinate Mg(2+): glutamate 279 and glutamate 291. Residues aspartate 298, lysine 367, and 374–375 (RR) contribute to the N(1)-(5-phospho-beta-D-ribosyl)glycinamide site.

The protein belongs to the PurK/PurT family. In terms of assembly, homodimer.

The catalysed reaction is N(1)-(5-phospho-beta-D-ribosyl)glycinamide + formate + ATP = N(2)-formyl-N(1)-(5-phospho-beta-D-ribosyl)glycinamide + ADP + phosphate + H(+). It participates in purine metabolism; IMP biosynthesis via de novo pathway; N(2)-formyl-N(1)-(5-phospho-D-ribosyl)glycinamide from N(1)-(5-phospho-D-ribosyl)glycinamide (formate route): step 1/1. Functionally, involved in the de novo purine biosynthesis. Catalyzes the transfer of formate to 5-phospho-ribosyl-glycinamide (GAR), producing 5-phospho-ribosyl-N-formylglycinamide (FGAR). Formate is provided by PurU via hydrolysis of 10-formyl-tetrahydrofolate. The sequence is that of Formate-dependent phosphoribosylglycinamide formyltransferase from Leptothrix cholodnii (strain ATCC 51168 / LMG 8142 / SP-6) (Leptothrix discophora (strain SP-6)).